Here is a 499-residue protein sequence, read N- to C-terminus: Probable cytosol aminopeptidase (499 aa).

Lys-263 and Asp-268 together coordinate Mn(2+). Lys-275 is an active-site residue. Asp-286, Asp-345, and Glu-347 together coordinate Mn(2+). Residue Arg-349 is part of the active site.

It belongs to the peptidase M17 family. The cofactor is Mn(2+).

The protein localises to the cytoplasm. The enzyme catalyses Release of an N-terminal amino acid, Xaa-|-Yaa-, in which Xaa is preferably Leu, but may be other amino acids including Pro although not Arg or Lys, and Yaa may be Pro. Amino acid amides and methyl esters are also readily hydrolyzed, but rates on arylamides are exceedingly low.. The catalysed reaction is Release of an N-terminal amino acid, preferentially leucine, but not glutamic or aspartic acids.. In terms of biological role, presumably involved in the processing and regular turnover of intracellular proteins. Catalyzes the removal of unsubstituted N-terminal amino acids from various peptides. The polypeptide is Probable cytosol aminopeptidase (Chlamydia caviae (strain ATCC VR-813 / DSM 19441 / 03DC25 / GPIC) (Chlamydophila caviae)).